The sequence spans 54 residues: uncharacterized protein (54 aa).

Residues 1–54 (MSKKSTPMTKDAASRIQSSAAKSGGDVSSGSFASRAQSAAAINANNTSNSTGKK) form a disordered region. The span at 28 to 54 (SSGSFASRAQSAAAINANNTSNSTGKK) shows a compositional bias: low complexity.

This is an uncharacterized protein from Dictyostelium discoideum (Social amoeba).